A 550-amino-acid polypeptide reads, in one-letter code: Zinc finger protein squeeze (550 aa).

Residues 73–105 (QQQQQQQQQEMLQQQQQHQAHQEQQQQQQQQQQ) show a composition bias toward low complexity. Residues 73–179 (QQQQQQQQQE…GGGGGDGDQS (107 aa)) form a disordered region. The segment covering 106–117 (QHHHQQQQHHLK) has biased composition (basic residues). The span at 141 to 156 (RSPQRPLMSSGSNASS) shows a compositional bias: polar residues. A compositionally biased stretch (gly residues) spans 164–176 (SGGGPGGGGGGDG). C2H2-type zinc fingers lie at residues 182-204 (YKCA…TRIH), 210-232 (YRCE…IRTH), 238-262 (YKCR…SRCH), 268-290 (FKCN…IPKH), and 299-321 (HICN…LQKH). A disordered region spans residues 399–485 (LQQHQQQQQQ…VPPSHLQQHR (87 aa)). The segment covering 400-416 (QQHQQQQQQQQQDMLQQ) has biased composition (low complexity). Thr-424 carries the phosphothreonine modification. Ser-428 and Ser-430 each carry phosphoserine. Positions 444-460 (QTTPQHHLQQQQQQQQP) are enriched in low complexity. Phosphotyrosine is present on residues Tyr-494 and Tyr-496.

Belongs to the krueppel C2H2-type zinc-finger protein family. In terms of assembly, interacts with nab; which acts as a coactivator. Interacts with ap.

It is found in the nucleus. In terms of biological role, transcription factor involved in neuronal fate specification. First required in embryonic CNS development to define the number of cells that express apterous (ap) in the ap thoracic cluster of interneurons. Later on, it plays a central role in the combinatorial code of transcription factors that specifies the fate of the Tv neuron in the ap cluster by participating in the transcription regulation of FMRFa in Tv cells. Also required for projection neuron dendritic targeting. The polypeptide is Zinc finger protein squeeze (sqz) (Drosophila pseudoobscura pseudoobscura (Fruit fly)).